Consider the following 490-residue polypeptide: Cytochrome P450 2C54 (490 aa).

Ser-127 bears the Phosphoserine mark. Residues Lys-252 and Lys-375 each carry the N6-acetyllysine modification. Cys-435 contacts heme.

This sequence belongs to the cytochrome P450 family. The cofactor is heme. Expressed in liver.

Its subcellular location is the endoplasmic reticulum membrane. It localises to the microsome membrane. The catalysed reaction is an organic molecule + reduced [NADPH--hemoprotein reductase] + O2 = an alcohol + oxidized [NADPH--hemoprotein reductase] + H2O + H(+). Metabolizes arachidonic acid mainly to 12-hydroxyeicosatetraenoic acid (HETE). This is Cytochrome P450 2C54 from Mus musculus (Mouse).